We begin with the raw amino-acid sequence, 1121 residues long: Piwi-like protein ergo-1 (1121 aa).

Positions 1–14 (MSYNNGGGGGGGGY) are enriched in gly residues. The interval 1-134 (MSYNNGGGGG…GNRGGGGGRV (134 aa)) is disordered. Composition is skewed to basic and acidic residues over residues 15–29 (RNDR…DRQN) and 40–77 (YNDD…DRRG). Polar residues predominate over residues 99–112 (GSNQRNDNYGNNRG). Over residues 125–134 (GNRGGGGGRV) the composition is skewed to gly residues. One can recognise a PAZ domain in the interval 426–534 (VMTQILTKMT…MPLELVSYIV (109 aa)). A Piwi domain is found at 774-1081 (NVLKYLADNK…AAKRAKETLD (308 aa)).

Belongs to the argonaute family. Piwi subfamily. As to quaternary structure, interacts with rde-12. Interacts with rde-10. As to expression, highly expressed in the germline in hermaphrodites.

The protein resides in the cytoplasm. Argonaute protein required for gene silencing in the endogenous RNA interference (RNAi) pathway. Involved in the 26G RNAi pathway and associates with both unmethylated and methylated 26G small interfering RNAs (26G-siRNAs), which are a class of 26 nucleotide siRNAs that possess a guanine residue at the 5'-end. Associated 26G-siRNAs are methylated by the methyltransferase henn-1, which stabilizes the siRNAs. Association with 26G-siRNAs is required for the biogenesis of secondary 22G-siRNAs (a class of 22 nucleotide siRNAs that possess a triphosphorylated guanine residue at the 5'-end). May be involved in passenger strand cleavage of target 26G-siRNAs. The polypeptide is Piwi-like protein ergo-1 (Caenorhabditis elegans).